Consider the following 382-residue polypeptide: Queuine tRNA-ribosyltransferase (382 aa).

Asp93 (proton acceptor) is an active-site residue. Substrate is bound by residues 93–97, Asp147, Gln191, and Gly218; that span reads DSGGF. Positions 249-255 are RNA binding; that stretch reads GVGKPED. Catalysis depends on Asp268, which acts as the Nucleophile. The tract at residues 273 to 277 is RNA binding; important for wobble base 34 recognition; sequence TRNAR. Cys306, Cys308, Cys311, and His337 together coordinate Zn(2+).

Belongs to the queuine tRNA-ribosyltransferase family. Homodimer. Within each dimer, one monomer is responsible for RNA recognition and catalysis, while the other monomer binds to the replacement base PreQ1. Zn(2+) serves as cofactor.

It catalyses the reaction 7-aminomethyl-7-carbaguanine + guanosine(34) in tRNA = 7-aminomethyl-7-carbaguanosine(34) in tRNA + guanine. It functions in the pathway tRNA modification; tRNA-queuosine biosynthesis. Functionally, catalyzes the base-exchange of a guanine (G) residue with the queuine precursor 7-aminomethyl-7-deazaguanine (PreQ1) at position 34 (anticodon wobble position) in tRNAs with GU(N) anticodons (tRNA-Asp, -Asn, -His and -Tyr). Catalysis occurs through a double-displacement mechanism. The nucleophile active site attacks the C1' of nucleotide 34 to detach the guanine base from the RNA, forming a covalent enzyme-RNA intermediate. The proton acceptor active site deprotonates the incoming PreQ1, allowing a nucleophilic attack on the C1' of the ribose to form the product. After dissociation, two additional enzymatic reactions on the tRNA convert PreQ1 to queuine (Q), resulting in the hypermodified nucleoside queuosine (7-(((4,5-cis-dihydroxy-2-cyclopenten-1-yl)amino)methyl)-7-deazaguanosine). This is Queuine tRNA-ribosyltransferase from Haemophilus influenzae (strain ATCC 51907 / DSM 11121 / KW20 / Rd).